The following is a 557-amino-acid chain: Probable WRKY transcription factor 20 (557 aa).

Residues 1–12 (MNPQANDRKEFQ) show a composition bias toward basic and acidic residues. 2 disordered regions span residues 1–36 (MNPQANDRKEFQGDCSATGDLTAKHDSAGGNGGGGA) and 76–215 (KPEP…DGYN). Residues 95–114 (SASSSSYTGRGFHQNTFTEQ) show a composition bias toward polar residues. The span at 151–169 (SSHSPSSISDAAGSSSELS) shows a compositional bias: low complexity. Positions 193 to 207 (SIQTSQNDSRGSTPS) are enriched in polar residues. The segment at residues 205–269 (TPSILADDGY…YKGTHDHPKP (65 aa)) is a DNA-binding region (WRKY 1). Zn(2+)-binding residues include cysteine 236, cysteine 241, histidine 264, and histidine 266. The disordered stretch occupies residues 257 to 348 (DIIYKGTHDH…PDDDDPFSKR (92 aa)). A compositionally biased stretch (basic and acidic residues) spans 282-299 (QEERLDKYPSSTGRDEKG). A compositionally biased stretch (polar residues) spans 303–314 (YNLSNPNEQTGN). The segment covering 321 to 332 (SASDDGGEAAAS) has biased composition (low complexity). Positions 375–440 (SEVDILDDGY…YEGKHDHDVP (66 aa)) form a DNA-binding region, WRKY 2. Zn(2+) contacts are provided by cysteine 406, cysteine 411, histidine 435, and histidine 437. 2 disordered regions span residues 433 to 486 (GKHD…QHQN) and 520 to 557 (NQYGQRETKNETQNGDISSLNNSSYPYPPNMGRVQSGP). The span at 520-536 (NQYGQRETKNETQNGDI) shows a compositional bias: polar residues.

It belongs to the WRKY group I family.

The protein resides in the nucleus. In terms of biological role, transcription factor. Interacts specifically with the W box (5'-(T)TGAC[CT]-3'), a frequently occurring elicitor-responsive cis-acting element. In Arabidopsis thaliana (Mouse-ear cress), this protein is Probable WRKY transcription factor 20 (WRKY20).